Reading from the N-terminus, the 458-residue chain is Delta(8)-fatty-acid desaturase (458 aa).

A Cytochrome b5 heme-binding domain is found at 16 to 100; the sequence is KKYITSKELK…LKDYQVSDIS (85 aa). Residues histidine 51 and histidine 74 each coordinate heme. The next 2 helical transmembrane spans lie at 122 to 142 and 147 to 167; these read GVIY…YGVL and FWIH…IAYL. Residues 169–173 carry the Histidine box-1 motif; it reads HDAGH. Residues 185 to 205 traverse the membrane as a helical segment; sequence FAGIFIGNCITGISIAWWKWT. Positions 206 to 210 match the Histidine box-2 motif; the sequence is HNAHH. Helical transmembrane passes span 264-284, 293-313, and 320-340; these read YYPI…LLLI, GLNI…VSRL, and VAFV…FTLN. The Histidine box-3 motif lies at 383–387; that stretch reads QLEHH.

This sequence belongs to the fatty acid desaturase type 1 family. Requires Fe cation as cofactor.

The protein localises to the membrane. It catalyses the reaction an N-acyl-(4R)-4-hydroxysphinganine + 2 Fe(II)-[cytochrome b5] + O2 + 2 H(+) = a (4R,8E)-4-hydroxysphingenine ceramide + 2 Fe(III)-[cytochrome b5] + 2 H2O. The enzyme catalyses an N-acyl-(4R)-4-hydroxysphinganine + 2 Fe(II)-[cytochrome b5] + O2 + 2 H(+) = a (4R,8Z)-4-hydroxysphing-8-enine ceramide + 2 Fe(III)-[cytochrome b5] + 2 H2O. In terms of biological role, plays a major role as delta(8)-fatty-acid desaturase which introduces a double bond at the 8-position in the long-chain base (LCB) of ceramides with or without a hydroxy group at the 4-position. The enzyme produces both the 8E and 8Z isomers. This structural modification contributes to the quantitative partitioning of ceramides between the two major sphingolipid classes, glucosylceramides and glycosylinositolphosphoryl ceramides. Sphingolipids are important membrane components involved in environmental stress responses, such as resistance to chilling, and act as cell signaling molecules. The chain is Delta(8)-fatty-acid desaturase (sld1) from Helianthus annuus (Common sunflower).